Consider the following 410-residue polypeptide: Replication factor C large subunit (410 aa).

46-53 lines the ATP pocket; the sequence is GDPGTGKT.

The protein belongs to the activator 1 small subunits family. RfcL subfamily. Heteromultimer composed of small subunits (RfcS) and large subunits (RfcL).

Part of the RFC clamp loader complex which loads the PCNA sliding clamp onto DNA. The polypeptide is Replication factor C large subunit (Picrophilus torridus (strain ATCC 700027 / DSM 9790 / JCM 10055 / NBRC 100828 / KAW 2/3)).